Reading from the N-terminus, the 243-residue chain is Cell division protein ZipA (243 aa).

Topologically, residues 1 to 4 (MSDV) are periplasmic. The helical transmembrane segment at 5 to 25 (TLLRIGIAIVGILFVAAVFFF) threads the bilayer. Over 26–243 (STPKTSAHRV…VPPLIKNSRW (218 aa)) the chain is Cytoplasmic. The segment at 32-89 (AHRVRTKKEEPPRERREPMLSTEVDNSPHQSVDEVPASVPQQQVNPEATKPGEIELGK) is disordered. Residues 38–49 (KKEEPPRERREP) are compositionally biased toward basic and acidic residues.

The protein belongs to the ZipA family. Interacts with FtsZ via their C-terminal domains.

Its subcellular location is the cell inner membrane. Its function is as follows. Essential cell division protein that stabilizes the FtsZ protofilaments by cross-linking them and that serves as a cytoplasmic membrane anchor for the Z ring. Also required for the recruitment to the septal ring of downstream cell division proteins. The protein is Cell division protein ZipA of Xylella fastidiosa (strain Temecula1 / ATCC 700964).